The primary structure comprises 60 residues: Large ribosomal subunit protein bL32 (60 aa).

A compositionally biased stretch (basic residues) spans 1–20 (MAKPARHTSKAKRNKRRTHY). Residues 1-22 (MAKPARHTSKAKRNKRRTHYKL) form a disordered region.

The protein belongs to the bacterial ribosomal protein bL32 family.

The sequence is that of Large ribosomal subunit protein bL32 from Streptococcus agalactiae serotype V (strain ATCC BAA-611 / 2603 V/R).